A 308-amino-acid polypeptide reads, in one-letter code: MRRDVSSKASPKVAMMMGGTSSERAVSLSSGRECGAALRAEGFEVIDLDAGPDLAARLEDLRPDVVFNALHGRWGEDGCVQGLLEWLRIPYTHSGVLASALAMDKERTKAAYAAAGLPIATSGLFTRAQIAARHVMPPPYVIKPYNEGSSVGVYLVPEGAEAAPELADDLPDTLMVEAFVPGRELTVTVQGDRALCVTDIVTEGWYDYDAKYVPGGSRHVLPAEVPGDVYDACMAHAETAHRVLGCRGISRTDFRWDPRRSLDGLALLETNTQPGMTPTSLTPEQAQHVGLGFGALCRWIVEDASCDR.

One can recognise an ATP-grasp domain in the interval 109–302; it reads KAAYAAAGLP…FGALCRWIVE (194 aa). ATP is bound at residue 136–186; that stretch reads MPPPYVIKPYNEGSSVGVYLVPEGAEAAPELADDLPDTLMVEAFVPGRELT. Residues Asp-253, Glu-269, and Asn-271 each contribute to the Mg(2+) site.

It belongs to the D-alanine--D-alanine ligase family. Mg(2+) serves as cofactor. Requires Mn(2+) as cofactor.

It is found in the cytoplasm. It catalyses the reaction 2 D-alanine + ATP = D-alanyl-D-alanine + ADP + phosphate + H(+). It functions in the pathway cell wall biogenesis; peptidoglycan biosynthesis. Functionally, cell wall formation. The chain is D-alanine--D-alanine ligase from Dinoroseobacter shibae (strain DSM 16493 / NCIMB 14021 / DFL 12).